Consider the following 223-residue polypeptide: Cutinase (223 aa).

The N-terminal stretch at 1-19 is a signal peptide; sequence MKFFAFSMLIGEASPIVLA. Cysteines 46 and 124 form a disulfide. The Nucleophile role is filled by S135. C185 and C192 form a disulfide bridge. The active site involves D189. The Proton donor/acceptor role is filled by H202.

Belongs to the cutinase family. In terms of processing, the 2 disulfide bonds play a critical role in holding the catalytic residues in juxta-position; reduction of the disulfide bridges results in the complete inactivation of the enzyme.

The protein resides in the secreted. The catalysed reaction is cutin + H2O = cutin monomers.. Functionally, catalyzes the hydrolysis of complex carboxylic polyesters found in the cell wall of plants. Degrades cutin, a macromolecule that forms the structure of the plant cuticle. Allows pathogenic fungi to penetrate through the cuticular barrier into the host plant during the initial stage of fungal infection. This Didymella rabiei (Chickpea ascochyta blight fungus) protein is Cutinase (CUT).